A 318-amino-acid chain; its full sequence is Inner membrane protein YbhN (318 aa).

The Periplasmic portion of the chain corresponds to 1–13 (MSKSHPRWRLAKK). The chain crosses the membrane as a helical span at residues 14-34 (ILTWLFFIAVIVLLVVYAKKV). Residues 35–50 (DWEEVWKVIRDYNRVA) lie on the Cytoplasmic side of the membrane. A helical transmembrane segment spans residues 51–71 (LLSAVGLVVVSYLIYGCYDLL). Over 72–85 (ARFYCGHKLAKRQV) the chain is Periplasmic. A helical membrane pass occupies residues 86–106 (MLVSFICYAFNLTLSTWVGGI). At 107 to 125 (GMRYRLYSRLGLPGSTITR) the chain is on the cytoplasmic side. Residues 126-146 (IFSLSITTNWLGYILLAGIIF) form a helical membrane-spanning segment. Topologically, residues 147 to 165 (TAGVVELPDHWYVDQTTLR) are periplasmic. Residues 166–186 (ILGIGLLMIIAVYLWFCAFAK) traverse the membrane as a helical segment. The Cytoplasmic segment spans residues 187-205 (HRHMTIKGQKLVLPSWKFA). The helical transmembrane segment at 206-226 (LAQMLISSVNWMVMGAIIWLL) threads the bilayer. Over 227–233 (LGQSVNY) the chain is Periplasmic. 2 consecutive transmembrane segments (helical) span residues 234-254 (FFVLGVLLVSSIAGVIVHIPA) and 255-275 (GIGVLEAVFIALLAGEHTSKG). Residues 276–277 (TI) are Periplasmic-facing. Residues 278–298 (IAALLAYRVLYYFIPLLLALI) form a helical membrane-spanning segment. The Cytoplasmic segment spans residues 299-318 (CYLLLESQAKKLRAKNEAAM).

It to Synechocystis PCC 6803 slr0712.

It localises to the cell inner membrane. The chain is Inner membrane protein YbhN (ybhN) from Escherichia coli (strain K12).